The primary structure comprises 311 residues: Aquaporin-1 (311 aa).

Topologically, residues 1–16 (MHPQVASLFDNVYEDL) are cytoplasmic. The chain crosses the membrane as a helical span at residues 17–37 (AAATLEFIGTAFFLLFGLGGI). Over 38-56 (QASTAEDTASSQPPASGIE) the chain is Extracellular. The helical transmembrane segment at 57-77 (HVLYISTCMGFSLVVSAWLFF) threads the bilayer. A topological domain (cytoplasmic) is located at residue Arg78. The helical transmembrane segment at 79–99 (VTGGLFNPNISFALLLVGGLK) threads the bilayer. Residues 85 to 87 (NPN) carry the NPA 1 motif. Pro100 is a topological domain (extracellular). Residues 101–121 (LRFVLFCIAQLTGAIAGAAIV) form a helical membrane-spanning segment. Residues 122-143 (RGLTSAPLSVNNVLQQGTSAAQ) lie on the Cytoplasmic side of the membrane. The helical transmembrane segment at 144-164 (GVFIEMFITAALVLSVLMLAA) threads the bilayer. At 165–168 (EKHE) the chain is on the extracellular side. A helical membrane pass occupies residues 169–189 (ATPFAPVGIGLTLFACHLFAV). Residues 190–215 (YYTGAAMNSARAFGPAVISGFPEPQH) are Cytoplasmic-facing. The short motif at 197–199 (NSA) is the NPA 2 element. The helical transmembrane segment at 216 to 236 (WVYWVGPFLGSLLGAGFYATL) threads the bilayer. At 237 to 311 (KHYKYWRLNP…TSSRTNFSPV (75 aa)) the chain is on the extracellular side. The interval 276 to 311 (DEETRNGCASNEEGVRATGDEKSSNATSSRTNFSPV) is disordered. A compositionally biased stretch (basic and acidic residues) spans 288 to 298 (EGVRATGDEKS). The segment covering 299 to 311 (SNATSSRTNFSPV) has biased composition (polar residues). A glycan (N-linked (GlcNAc...) asparagine) is linked at Asn300.

Belongs to the MIP/aquaporin (TC 1.A.8) family.

The protein resides in the cell membrane. It catalyses the reaction H2O(in) = H2O(out). The catalysed reaction is H2O2(out) = H2O2(in). It carries out the reaction nitric oxide(out) = nitric oxide(in). The enzyme catalyses CO2(out) = CO2(in). Functionally, water channel required to facilitate the transport of water across membranes. Also mediates the transport nitric oxide, hydrogen peroxide and carbon dioxide across the membrane. Required for Hartig net development in trembling aspen trees. Contributes in fungal cellular processes during the basidiocarp formation. The chain is Aquaporin-1 from Laccaria bicolor (Bicoloured deceiver).